Reading from the N-terminus, the 80-residue chain is Clavaspirin (80 aa).

The N-terminal stretch at M1–A17 is a signal peptide. Positions K18 to K29 are excised as a propeptide. L52 carries the leucine amide modification. A propeptide spanning residues G53–Q80 is cleaved from the precursor.

In terms of tissue distribution, pharyngeal tissues and hemocytes.

The protein resides in the secreted. In terms of biological role, exhibits broad-spectrum antimicrobial activity against both Gram-positive and Gram-negative bacteria. Has potent hemolytic activity. The sequence is that of Clavaspirin from Styela clava (Sea squirt).